A 242-amino-acid chain; its full sequence is uncharacterized protein (242 aa).

Transmembrane regions (helical) follow at residues 4 to 24 and 34 to 54; these read NYQVSLIFSVIYVVTNSYYVV and LLFGSFYLTMEVFQTLQWLFG. An N-linked (GlcNAc...) asparagine; by host glycan is attached at N73. 3 consecutive transmembrane segments (helical) span residues 74–94, 106–126, and 162–182; these read YTIVAFILIWLQPILFSVIGY, VLTVLNCFVFFYGLKLLYGGF, and LDVFPNHLTYIILCIISFVMY. A glycan (N-linked (GlcNAc...) asparagine; by host) is linked at N185. The next 2 membrane-spanning stretches (helical) occupy residues 189 to 209 and 217 to 237; these read VIGLGWLLSLIVTKLLLAPTL and CLLSIIANLLIVAYVHISTGI.

The protein resides in the membrane. This is an uncharacterized protein from Acanthamoeba polyphaga mimivirus (APMV).